We begin with the raw amino-acid sequence, 366 residues long: Chorismate synthase (366 aa).

Residues Arg-48 and Arg-54 each coordinate NADP(+). Residues 125 to 127 (RSS), 238 to 239 (NA), Gly-278, 293 to 297 (KPTSS), and Arg-319 each bind FMN.

This sequence belongs to the chorismate synthase family. As to quaternary structure, homotetramer. The cofactor is FMNH2.

It catalyses the reaction 5-O-(1-carboxyvinyl)-3-phosphoshikimate = chorismate + phosphate. The protein operates within metabolic intermediate biosynthesis; chorismate biosynthesis; chorismate from D-erythrose 4-phosphate and phosphoenolpyruvate: step 7/7. Its function is as follows. Catalyzes the anti-1,4-elimination of the C-3 phosphate and the C-6 proR hydrogen from 5-enolpyruvylshikimate-3-phosphate (EPSP) to yield chorismate, which is the branch point compound that serves as the starting substrate for the three terminal pathways of aromatic amino acid biosynthesis. This reaction introduces a second double bond into the aromatic ring system. The protein is Chorismate synthase of Chromobacterium violaceum (strain ATCC 12472 / DSM 30191 / JCM 1249 / CCUG 213 / NBRC 12614 / NCIMB 9131 / NCTC 9757 / MK).